Consider the following 123-residue polypeptide: MSLRIRLKKLGSKKRPYYRIVVQDAREPRDGRAIEELGIYQPIAPKGTEVSFRLDRARFWLERGAQPSDTVRRLLQSRRGSVLNAVASDERRVASSQQAADLAHVESVSCAAPIPSSPGGQGV.

It belongs to the bacterial ribosomal protein bS16 family.

The sequence is that of Small ribosomal subunit protein bS16 from Treponema pallidum (strain Nichols).